Reading from the N-terminus, the 490-residue chain is GTPase Der (490 aa).

EngA-type G domains are found at residues 3–166 (PVVA…MEDL) and 203–376 (IKLA…DSST). GTP contacts are provided by residues 9-16 (GRPNVGKS), 56-60 (DTGGI), 118-121 (NKTD), 209-216 (GRPNVGKS), 256-260 (DTAGV), and 321-324 (NKWD). Positions 377–461 (RRVGTSMLTR…PIRIQFKEGE (85 aa)) constitute a KH-like domain.

It belongs to the TRAFAC class TrmE-Era-EngA-EngB-Septin-like GTPase superfamily. EngA (Der) GTPase family. In terms of assembly, associates with the 50S ribosomal subunit.

Its function is as follows. GTPase that plays an essential role in the late steps of ribosome biogenesis. This is GTPase Der from Escherichia coli O81 (strain ED1a).